A 162-amino-acid chain; its full sequence is Regulator of ribonuclease activity A (162 aa).

This sequence belongs to the RraA family. Homotrimer. Binds to both RNA-binding sites in the C-terminal region of Rne and to RhlB.

The protein resides in the cytoplasm. Functionally, globally modulates RNA abundance by binding to RNase E (Rne) and regulating its endonucleolytic activity. Can modulate Rne action in a substrate-dependent manner by altering the composition of the degradosome. Modulates RNA-binding and helicase activities of the degradosome. The sequence is that of Regulator of ribonuclease activity A from Haemophilus influenzae (strain ATCC 51907 / DSM 11121 / KW20 / Rd).